A 1220-amino-acid polypeptide reads, in one-letter code: MAVSRLLILICLYSFVTFAYPKVTQDYRNHLPIKFAKRSEVTPNTSLAQCPKYVTVYSSGSSHYISTIYPVNKTHHTEYTTLTDGSIDTYTITAKTDTGTDVVVVETSANTITTTLYSGSLEFTTTLDSANGTTPATIEVVEPAAGTVTTTIYSGTTPFNTTLASATDTVPGTVEVVEPEAGTVTTTVYSGTQEYTTTLATASGTVSGTVEVVDTAAGTVTTTIYSGTTPFNTTLASATDTVPGTVEVVEPEAGTVTTTVYSGTQEYTTTLATASGTVSGTVEVVDTAAGTVTTTIYSGTTPFNTTLASATDTVPGTVEVVEPEAGTVTTTVYSGTQEYTTTLATASGTVSGTVEVVDTAAGTVTTTIYSGTTPFNTTLASATDTVPGTVEVVEPEAGTVTTTVYSGTQEYTTTLATASGTVSGTVEVVDTAAGTVTTTIYSGTTPFNTTLASATDTVPGTVEVVEPEAGTVTTTVYSGTQEYTTTLATASGTVSGTVEVVDTAAGTVTTTIYSGTTPFNTTLASATDTVPGTVEVVEPEAGTVTTTVYSGTQEYTTTLATASGTVSGTVEVVDTAAGTVTTTIYSGTTPFNTTLASATDTVPGTVEVVEPEAGTVTTTVYSGTQEYTTTLATASGTVSGTVEVIEPAAGTVTTTVYSGTQEYTTTLATASGTVSGTVEVIEPAAGTVTSTVYSGTQEYTTTLATASGTVSGTVEVIEPAAGTVTTTVYSGTQEYTTTLATASGTVSGTVEVIEPAAGTVTTTVYSGSEVYTTTLASASESVPGTVEVVDPEAGSVTTTIYSGSVEYTTVLADASGSVTGTVEVVEPAAGTVTTTVYSGSEVYTTTLASASESVPGTVEVVDPEAGSVTTTIYSGSVEYTTVLADASGSVTGTVEVVEPAAGTVTGTLTSGSQFFTTTIAQASGSVSGNVEVIEPSGSTVTSTIYSGSESFTTTLAVGSGTIPGTVEVILPAPTTIYTGTVATTITYSSSSTPVSTVVVIPTAVCSGVRGLQYAVYNYDISASKSKFCVSSGNTDVAAFTQPAYFGSSSLDQSSPLFTGVLSSTAALPEWTSSYYLPDYPPDATAMESTRCNCKAIVYQFFFRVPYTDTYELNVYNVDDVFYGWFGDKAISGWSNTNYDAYAYWHVTTGQTGMGSFSMGTLTQGSFLPIRLIVANGGGKGGFNFDFSSSTDTYAATSYAYTATCTQSFLPFGLGNGGIDN.

The first 21 residues, methionine 1–proline 21, serve as a signal peptide directing secretion. Residues asparagine 44, asparagine 72, asparagine 131, and asparagine 160 are each glycosylated (N-linked (GlcNAc...) asparagine). A run of 24 repeats spans residues asparagine 110–alanine 145, glycine 146–alanine 181, glycine 182–alanine 217, glycine 218–alanine 253, glycine 254–alanine 289, glycine 290–alanine 325, glycine 326–alanine 361, glycine 362–alanine 397, glycine 398–alanine 433, glycine 434–alanine 469, glycine 470–alanine 505, glycine 506–alanine 541, glycine 542–alanine 577, glycine 578–alanine 613, glycine 614–alanine 649, glycine 650–alanine 685, glycine 686–alanine 721, glycine 722–alanine 757, glycine 758–alanine 793, glycine 794–alanine 829, glycine 830–alanine 865, glycine 866–alanine 901, glycine 902–glycine 937, and serine 938–proline 973. Positions asparagine 110 to proline 973 are 24 X 36 AA approximate tandem repeats. An N-linked (GlcNAc...) asparagine glycan is attached at asparagine 232. A glycan (N-linked (GlcNAc...) asparagine) is linked at asparagine 304. Asparagine 376 carries an N-linked (GlcNAc...) asparagine glycan. N-linked (GlcNAc...) asparagine glycosylation occurs at asparagine 448. The N-linked (GlcNAc...) asparagine glycan is linked to asparagine 520. Asparagine 592 carries an N-linked (GlcNAc...) asparagine glycan. The PA14 domain maps to phenylalanine 1039–alanine 1202.

Belongs to the mam3/map4 family.

The protein localises to the cell surface. Its function is as follows. May be involved in agglutination during conjugation or other aspects of colony formation. The polypeptide is Putative cell agglutination protein SPAPB2C8.01 (Schizosaccharomyces pombe (strain 972 / ATCC 24843) (Fission yeast)).